Consider the following 353-residue polypeptide: Ion-translocating oxidoreductase complex subunit D (353 aa).

The next 3 helical transmembrane spans lie at 20–39, 68–88, and 129–149; these read LMRL…WYFF, PISH…LGIC, and VMLL…LTLV. T187 is subject to FMN phosphoryl threonine. 4 helical membrane passes run 215–235, 238–258, 267–287, and 300–320; these read LALG…FLIS, AIAW…SFIG, ASTM…FILT, and IIVG…GGYP.

Belongs to the NqrB/RnfD family. In terms of assembly, the complex is composed of six subunits: RnfA, RnfB, RnfC, RnfD, RnfE and RnfG. The cofactor is FMN.

The protein resides in the cell inner membrane. Functionally, part of a membrane-bound complex that couples electron transfer with translocation of ions across the membrane. The chain is Ion-translocating oxidoreductase complex subunit D from Colwellia psychrerythraea (strain 34H / ATCC BAA-681) (Vibrio psychroerythus).